The sequence spans 321 residues: Large ribosomal subunit protein uL10 (321 aa).

Residues 284 to 321 are disordered; it reads SAGTAPTGGGAAAAAVEEKKEEPEEESDDDIGFSLFDD. Over residues 306 to 321 the composition is skewed to acidic residues; it reads PEEESDDDIGFSLFDD.

This sequence belongs to the universal ribosomal protein uL10 family. P0 forms a pentameric complex by interaction with dimers of P1 and P2. Phosphorylated.

Its function is as follows. Ribosomal protein P0 is the functional equivalent of E.coli protein L10. The polypeptide is Large ribosomal subunit protein uL10 (Oxybasis rubra (Red goosefoot)).